The sequence spans 351 residues: L-threonine 3-dehydrogenase (351 aa).

Cysteine 42 contacts Zn(2+). Active-site charge relay system residues include threonine 44 and histidine 47. Residues histidine 67, glutamate 68, cysteine 97, cysteine 100, cysteine 103, and cysteine 111 each coordinate Zn(2+). NAD(+)-binding positions include isoleucine 179, aspartate 199, arginine 204, 266 to 268, and 291 to 292; these read LGL and IT.

It belongs to the zinc-containing alcohol dehydrogenase family. Homotetramer. The cofactor is Zn(2+).

Its subcellular location is the cytoplasm. The enzyme catalyses L-threonine + NAD(+) = (2S)-2-amino-3-oxobutanoate + NADH + H(+). It functions in the pathway amino-acid degradation; L-threonine degradation via oxydo-reductase pathway; glycine from L-threonine: step 1/2. In terms of biological role, catalyzes the NAD(+)-dependent oxidation of L-threonine to 2-amino-3-ketobutyrate. The protein is L-threonine 3-dehydrogenase of Symbiobacterium thermophilum (strain DSM 24528 / JCM 14929 / IAM 14863 / T).